The chain runs to 34 residues: Photosystem II reaction center protein M (34 aa).

A helical membrane pass occupies residues 5–25 (ILAFIATALFILIPTAFSLIL).

The protein belongs to the PsbM family. As to quaternary structure, PSII is composed of 1 copy each of membrane proteins PsbA, PsbB, PsbC, PsbD, PsbE, PsbF, PsbH, PsbI, PsbJ, PsbK, PsbL, PsbM, PsbT, PsbX, PsbY, PsbZ, Psb30/Ycf12, at least 3 peripheral proteins of the oxygen-evolving complex and a large number of cofactors. It forms dimeric complexes.

Its subcellular location is the plastid. The protein resides in the chloroplast thylakoid membrane. Its function is as follows. One of the components of the core complex of photosystem II (PSII). PSII is a light-driven water:plastoquinone oxidoreductase that uses light energy to abstract electrons from H(2)O, generating O(2) and a proton gradient subsequently used for ATP formation. It consists of a core antenna complex that captures photons, and an electron transfer chain that converts photonic excitation into a charge separation. This subunit is found at the monomer-monomer interface. This chain is Photosystem II reaction center protein M, found in Huperzia lucidula (Shining clubmoss).